A 713-amino-acid chain; its full sequence is Leucine-rich repeat-containing protein 4B (713 aa).

The signal sequence occupies residues 1–35 (MARARGSPCPPLPPGRMSWPHGALLFLWLFSPPLG). Topologically, residues 36–576 (AGGGGVAVTS…DLDDVMKTTK (541 aa)) are extracellular. The LRRNT domain maps to 48–86 (GGGSPPATSCPVACSCSNQASRVICTRRDLAEVPASIPV). LRR repeat units lie at residues 87 to 108 (NTRY…TFKH), 111 to 132 (HLEI…AFNG), 135 to 156 (SLNT…AFEY), 159 to 180 (KLRE…AFNR), 183 to 205 (SLRR…AFEG), 208 to 229 (NLRY…TALV), 230 to 251 (RLEE…SFQG), 254 to 275 (SLRK…AFDD), and 278 to 299 (SLEE…LFTP). The N-linked (GlcNAc...) asparagine glycan is linked to Asn224. N-linked (GlcNAc...) asparagine glycosylation is found at Asn283, Asn333, Asn374, Asn400, Asn422, Asn425, Asn444, and Asn452. Residues 311–363 (NPWHCNCDVLWLSWWLKETVPSNTTCCARCHAPAGLKGRYIGELDQSHFTCYA) enclose the LRRCT domain. The 89-residue stretch at 364–452 (PVIVEPPTDL…GNTTASATLN (89 aa)) folds into the Ig-like C2-type domain. A disulfide bond links Cys385 and Cys436. Residues 497–551 (TQPGEEALQPRGTEKEPPGPTTDGVWGGGRPGDAAGPASSSTTAPAPRSSRPTEK) form a disordered region. A compositionally biased stretch (low complexity) spans 528 to 546 (GDAAGPASSSTTAPAPRSS). Residues 577-597 (IIIGCFVAITFMAAVMLVAFY) form a helical membrane-spanning segment. Residues 598 to 713 (KLRKQHQLHK…SKENVQETQI (116 aa)) lie on the Cytoplasmic side of the membrane. Phosphoserine is present on Ser693. The disordered stretch occupies residues 694 to 713 (IHEPLLFKSGSKENVQETQI). Residues 703 to 713 (GSKENVQETQI) are compositionally biased toward basic and acidic residues.

As to quaternary structure, interacts with PTPRF. Interacts with DLG4. N-glycosylated. O-glycosylated; contains sialic acid.

The protein localises to the membrane. It localises to the presynaptic cell membrane. Functionally, synaptic adhesion protein. Regulates the formation of excitatory synapses. The trans-synaptic adhesion between LRRC4B and PTPRF regulates the formation of excitatory synapses in a bidirectional manner. In Homo sapiens (Human), this protein is Leucine-rich repeat-containing protein 4B (LRRC4B).